Reading from the N-terminus, the 517-residue chain is UPF0522 protein B (517 aa).

An N-terminal signal peptide occupies residues 1–19 (MNKTIILLLISIIFEIVIS). Asn-148, Asn-245, Asn-333, Asn-345, Asn-370, Asn-423, Asn-432, and Asn-495 each carry an N-linked (GlcNAc...) asparagine glycan.

It belongs to the UPF0522 family.

The protein resides in the secreted. The sequence is that of UPF0522 protein B from Dictyostelium discoideum (Social amoeba).